We begin with the raw amino-acid sequence, 220 residues long: Deoxyribose-phosphate aldolase 2 (220 aa).

D89 (proton donor/acceptor) is an active-site residue. K151 acts as the Schiff-base intermediate with acetaldehyde in catalysis. The active-site Proton donor/acceptor is the K180.

Belongs to the DeoC/FbaB aldolase family. DeoC type 1 subfamily.

The protein localises to the cytoplasm. It carries out the reaction 2-deoxy-D-ribose 5-phosphate = D-glyceraldehyde 3-phosphate + acetaldehyde. The protein operates within carbohydrate degradation; 2-deoxy-D-ribose 1-phosphate degradation; D-glyceraldehyde 3-phosphate and acetaldehyde from 2-deoxy-alpha-D-ribose 1-phosphate: step 2/2. Catalyzes a reversible aldol reaction between acetaldehyde and D-glyceraldehyde 3-phosphate to generate 2-deoxy-D-ribose 5-phosphate. The protein is Deoxyribose-phosphate aldolase 2 of Staphylococcus aureus (strain MRSA252).